Reading from the N-terminus, the 438-residue chain is Aspartate--tRNA(Asp) ligase (438 aa).

An L-aspartate-binding site is contributed by Glu-170. The interval 192 to 195 is aspartate; the sequence is QLYK. Position 214 (Arg-214) interacts with L-aspartate. ATP is bound by residues 214–216, 222–224, and Glu-361; these read RAE and RHL. 2 residues coordinate Mg(2+): Glu-361 and Ser-364. Residues Ser-364 and Arg-368 each coordinate L-aspartate. Position 409-412 (409-412) interacts with ATP; sequence GAER.

This sequence belongs to the class-II aminoacyl-tRNA synthetase family. Type 2 subfamily. In terms of assembly, homodimer. Mg(2+) serves as cofactor.

It is found in the cytoplasm. The catalysed reaction is tRNA(Asp) + L-aspartate + ATP = L-aspartyl-tRNA(Asp) + AMP + diphosphate. Functionally, catalyzes the attachment of L-aspartate to tRNA(Asp) in a two-step reaction: L-aspartate is first activated by ATP to form Asp-AMP and then transferred to the acceptor end of tRNA(Asp). In Pyrococcus abyssi (strain GE5 / Orsay), this protein is Aspartate--tRNA(Asp) ligase.